The sequence spans 234 residues: BTB/POZ domain-containing protein KCTD5 (234 aa).

A2 bears the N-acetylalanine mark. The BTB domain maps to 44–146 (KWVRLNVGGT…LVKDKIRERD (103 aa)). The tract at residues 213-234 (PYGTTSEPSEKAKILQERGSRM) is disordered. Positions 220 to 234 (PSEKAKILQERGSRM) are enriched in basic and acidic residues.

As to quaternary structure, homopentamer. Interacts (via C-terminus) with GRASP55/GORASP2. Interacts with CUL3 and with ubiquitinated proteins. Interacts with CRY1.

The protein resides in the cytoplasm. Its subcellular location is the cytosol. The protein localises to the nucleus. In terms of biological role, its interaction with CUL3 suggests that it may act as a substrate adapter in some E3 ligase complex. Does not affect the function of Kv channel Kv2.1/KCNB1, Kv1.2/KCNA2, Kv4.2/KCND2 and Kv3.4/KCNC4. This Rattus norvegicus (Rat) protein is BTB/POZ domain-containing protein KCTD5 (Kctd5).